Reading from the N-terminus, the 84-residue chain is uncharacterized protein (84 aa).

The region spanning 1-83 is the LITAF domain; it reads MDDKFTTLPC…CKQAVFVYKI (83 aa). Zn(2+) contacts are provided by C21 and C24. Residues 39 to 61 form a membrane-binding amphipathic helix region; sequence MSWVVCTAITLACLPCCCIPFLC. Residues C71 and C74 each contribute to the Zn(2+) site.

It localises to the host membrane. This is an uncharacterized protein from Dryophytes versicolor (chameleon treefrog).